A 293-amino-acid polypeptide reads, in one-letter code: AKT-interacting protein (293 aa).

The span at 1 to 11 (MNPFWSMSTSS) shows a compositional bias: polar residues. The tract at residues 1–63 (MNPFWSMSTS…TSPAPAAQST (63 aa)) is disordered. Positions 14-23 (KRSEGEEKTL) are enriched in basic and acidic residues. Residue Ser30 is modified to Phosphoserine. One can recognise a UBC core domain in the interval 74 to 222 (YLEYSLLAEF…VVDSVQVCTA (149 aa)). Basic and acidic residues predominate over residues 253–265 (MLTQKKKPEEQHN). The segment at 253 to 293 (MLTQKKKPEEQHNKSVHVAGLSWVKPGSVQPFSKEEKTVAT) is disordered.

Belongs to the ubiquitin-conjugating enzyme family. FTS subfamily. Component of the FTS/Hook/FHIP complex (FHF complex), composed of AKTIP/FTS, FHIP1B, and one or more members of the Hook family of proteins HOOK1, HOOK2, and HOOK3. Interacts directly with HOOK1, HOOK2 and HOOK3. The FHF complex associates with the homotypic vesicular sorting complex (the HOPS complex). Also interacts with AKT1. May interact with FHIP1A.

It is found in the cytoplasm. The protein resides in the cell membrane. Its function is as follows. Component of the FTS/Hook/FHIP complex (FHF complex). The FHF complex may function to promote vesicle trafficking and/or fusion via the homotypic vesicular protein sorting complex (the HOPS complex). Regulates apoptosis by enhancing phosphorylation and activation of AKT1. Increases release of TNFSF6 via the AKT1/GSK3B/NFATC1 signaling cascade. FHF complex promotes the distribution of AP-4 complex to the perinuclear area of the cell. The chain is AKT-interacting protein (AKTIP) from Pongo abelii (Sumatran orangutan).